A 1087-amino-acid polypeptide reads, in one-letter code: MMPMILTVFLSNNEQILTEVPITPETTCRDVVEFCKEPGEGGCHLAEVWRGSERPIPYDHMMYEHLQKWGPRREEVKFFLRHEDSPTESSEQGARQTQEQRTQRSVVNVPGEKRTENGVGNPRVELTLSELQDMAARQQQQIENQQQMLVAKEQRLHFLKQQERRQQQSVSENEKLQKLKERVEAQENKLKKIRAMRGQVDYSKIMNGNLSAEIERFSAMFQEKKQEVQTAILRVDQLSQQLEDLKKGKLNGFQSYNGRLTGPAAVELKRLYQELQIRNQLNQEQNSKLQQQKELLNKRNMEVAMMDKRISELRERLYGKKIQLNRVNGTSSPQSPLSTSGRVAAVGPYIQVPSTGGFPLPGDPVKPQSLTIASSAAHGRSKSANDGNWPPLKQNSASVKSTQMTGDWKDSGMEGTLKQGAISSQPLPLSALGATEKLGIEIGKGPPPIPGVGKPLPPSYGTYPSSGPLGPGSTSSLERRKEGSLPRPGAGPPSRQKPAPLPPASNAPQPGSSQQIQQRISVPPSPTYPPAGPPAFPTGDGKPELPLTVAIRPFLADKGSRPQSPRKGPQTVNSSSIYSMYLQQATPPKNYQPPAHGTLNKSVKAVYGKPVLPSGSASPSPLPFLHGSLGTGTAQPQPPSDSAEKEPEQEGPSVPGEGSTVESLPRPLSPTKLTPIVHSPLRYQSDADLEALRRKLANAPRPLKKRSSITEPEGPGGPNIQKLLYQRFNTLAGGMEGTPFYQPSPSQDFVGTLADMDNGNTNANGNLDEPFPPRPTAPLPEELAPSSDANDNELPSPEPEELICPQTTHQTAEPTEDNNNNVAPVPSTEQIPSPVAEAPSEEDQVPPAPLSPVIHPPAASASKRTNLKKPNSERTGHGLRVRFNPLALLLDASLEGEFDLVQRIIYEVEDPSKPNDEGITPLHNAVCAGHHHIVKFLLDFGVNVNAADSDGWTPLHCAASCNSVHLCKQLVESGAAIFASTISDIETAADKCEEMEEGYIQCSQFLYGVQEKLGVMNKGTVYALWDYEAQNSDELSFHEGDAITILRRKDENETEWWWARLGDREGYVPKNLLGLYPRIKPRQRTLA.

The segment at 82-122 (HEDSPTESSEQGARQTQEQRTQRSVVNVPGEKRTENGVGNP) is disordered. Positions 87 to 106 (TESSEQGARQTQEQRTQRSV) are enriched in polar residues. Residues Ser-332 and Ser-335 each carry the phosphoserine modification. Disordered regions lie at residues 374 to 415 (SSAA…GMEG), 442 to 721 (IGKG…PNIQ), and 734 to 878 (GMEG…TGHG). A compositionally biased stretch (polar residues) spans 393–405 (KQNSASVKSTQMT). The span at 445–458 (GPPPIPGVGKPLPP) shows a compositional bias: pro residues. The segment covering 459–476 (SYGTYPSSGPLGPGSTSS) has biased composition (low complexity). A compositionally biased stretch (polar residues) spans 506-520 (NAPQPGSSQQIQQRI). Residues 523 to 536 (PPSPTYPPAGPPAF) show a composition bias toward pro residues. Asymmetric dimethylarginine is present on Arg-552. The segment covering 570 to 589 (QTVNSSSIYSMYLQQATPPK) has biased composition (polar residues). Low complexity predominate over residues 610–625 (PVLPSGSASPSPLPFL). 2 positions are modified to phosphoserine: Ser-679 and Ser-708. Residues 805–831 (PQTTHQTAEPTEDNNNNVAPVPSTEQI) are compositionally biased toward polar residues. 2 ANK repeats span residues 917–949 (EGIT…AADS) and 950–982 (DGWT…ASTI). Positions 1016–1078 (MNKGTVYALW…PKNLLGLYPR (63 aa)) constitute an SH3 domain.

Belongs to the ASPP family. As to quaternary structure, interacts with P53/TP53; the interaction promotes pro-apoptotic activity.

The protein localises to the cytoplasm. It is found in the nucleus. Regulator that plays a central role in regulation of apoptosis via its interaction with p53/TP53. Regulates TP53 by enhancing the DNA binding and transactivation function of TP53 on the promoters of proapoptotic genes in vivo. This is Apoptosis-stimulating of p53 protein 1 (Ppp1r13b) from Mus musculus (Mouse).